We begin with the raw amino-acid sequence, 255 residues long: Hydroxyacylglutathione hydrolase (255 aa).

The Zn(2+) site is built by H56, H58, D60, H61, H114, D133, and H171.

Belongs to the metallo-beta-lactamase superfamily. Glyoxalase II family. Monomer. The cofactor is Zn(2+).

It catalyses the reaction an S-(2-hydroxyacyl)glutathione + H2O = a 2-hydroxy carboxylate + glutathione + H(+). It participates in secondary metabolite metabolism; methylglyoxal degradation; (R)-lactate from methylglyoxal: step 2/2. Its function is as follows. Thiolesterase that catalyzes the hydrolysis of S-D-lactoyl-glutathione to form glutathione and D-lactic acid. The sequence is that of Hydroxyacylglutathione hydrolase from Cereibacter sphaeroides (strain ATCC 17025 / ATH 2.4.3) (Rhodobacter sphaeroides).